Consider the following 138-residue polypeptide: Thyrotropin subunit beta (138 aa).

Residues Met1–Ser20 form the signal peptide. 6 cysteine pairs are disulfide-bonded: Cys22–Cys72, Cys36–Cys87, Cys39–Cys125, Cys47–Cys103, Cys51–Cys105, and Cys108–Cys115. Residue Asn43 is glycosylated (N-linked (GlcNAc...) asparagine). Positions Leu133 to Gly138 are excised as a propeptide.

It belongs to the glycoprotein hormones subunit beta family. In terms of assembly, heterodimer of a common alpha chain and a unique beta chain which confers biological specificity to thyrotropin, lutropin, follitropin and gonadotropin.

The protein localises to the secreted. Indispensable for the control of thyroid structure and metabolism. The polypeptide is Thyrotropin subunit beta (Tshb) (Rattus norvegicus (Rat)).